We begin with the raw amino-acid sequence, 626 residues long: Carnitine O-acetyltransferase (626 aa).

K93 is modified (N6-succinyllysine). The residue at position 261 (K261) is an N6-acetyllysine; alternate. Residue K261 is modified to N6-succinyllysine; alternate. K268 bears the N6-acetyllysine mark. H343 serves as the catalytic Proton acceptor. CoA is bound by residues K419 and 423–430 (KSEKLSPD). (R)-carnitine-binding residues include Y452 and S454. S456 is a binding site for CoA. A (R)-carnitine-binding site is contributed by T465. 2 residues coordinate CoA: R504 and Q555. The Microbody targeting signal motif lies at 624–626 (AKL).

Belongs to the carnitine/choline acetyltransferase family. As to quaternary structure, monomer.

The protein resides in the endoplasmic reticulum. It localises to the peroxisome. The protein localises to the mitochondrion inner membrane. The enzyme catalyses (R)-carnitine + acetyl-CoA = O-acetyl-(R)-carnitine + CoA. The catalysed reaction is propanoyl-CoA + (R)-carnitine = O-propanoyl-(R)-carnitine + CoA. It carries out the reaction butanoyl-CoA + (R)-carnitine = O-butanoyl-(R)-carnitine + CoA. It catalyses the reaction hexanoyl-CoA + (R)-carnitine = O-hexanoyl-(R)-carnitine + CoA. The enzyme catalyses octanoyl-CoA + (R)-carnitine = O-octanoyl-(R)-carnitine + CoA. The catalysed reaction is decanoyl-CoA + (R)-carnitine = O-decanoyl-(R)-carnitine + CoA. It carries out the reaction 3-methylbutanoyl-CoA + (R)-carnitine = O-3-methylbutanoyl-(R)-carnitine + CoA. It catalyses the reaction 2-methylpropanoyl-CoA + (R)-carnitine = O-isobutanoyl-(R)-carnitine + CoA. The enzyme catalyses 2-methylbutanoyl-CoA + (R)-carnitine = O-2-methylbutanoyl-(R)-carnitine + CoA. The catalysed reaction is acetoacetyl-CoA + (R)-carnitine = O-3-oxobutanoyl-(R)-carnitine + CoA. It carries out the reaction 3-hydroxybutanoyl-CoA + (R)-carnitine = O-3-hydroxybutanoyl-(R)-carnitine + CoA. It catalyses the reaction 4,8-dimethylnonanoyl-CoA + (R)-carnitine = O-4,8-dimethylnonanoyl-(R)-carnitine + CoA. The enzyme catalyses 2,6-dimethylheptanoyl-CoA + (R)-carnitine = O-2,6-dimethylheptanoyl-(R)-carnitine + CoA. In terms of biological role, catalyzes the reversible transfer of acyl groups from carnitine to coenzyme A (CoA) and regulates the acyl-CoA/CoA ratio. Also plays a crucial role in the transport of fatty acids for beta-oxidation. Responsible for the synthesis of short- and branched-chain acylcarnitines. Active towards some branched-chain amino acid oxidation pathway (BCAAO) intermediates. Trans-2-enoyl-CoAs and 2-methylacyl-CoAs are poor substrates. This is Carnitine O-acetyltransferase from Mus musculus (Mouse).